A 149-amino-acid chain; its full sequence is Calmodulin-3 (149 aa).

Alanine 2 is modified (N-acetylalanine). 4 consecutive EF-hand domains span residues 8–43 (DQIA…LGQN), 44–79 (PTEA…KMKD), 81–116 (DSEE…LGEK), and 117–149 (LTDE…MMAK). The Ca(2+) site is built by aspartate 21, aspartate 23, aspartate 25, cysteine 27, glutamate 32, aspartate 57, aspartate 59, asparagine 61, threonine 63, glutamate 68, aspartate 94, aspartate 96, asparagine 98, and glutamate 105. The residue at position 116 (lysine 116) is an N6,N6,N6-trimethyllysine. Ca(2+) contacts are provided by aspartate 130, aspartate 132, aspartate 134, glutamine 136, and glutamate 141.

The protein belongs to the calmodulin family.

In terms of biological role, calmodulin mediates the control of a large number of enzymes, ion channels and other proteins by Ca(2+). Among the enzymes to be stimulated by the calmodulin-Ca(2+) complex are a number of protein kinases and phosphatases. The sequence is that of Calmodulin-3 (CAM3) from Oryza sativa subsp. indica (Rice).